The chain runs to 52 residues: MLHYAMIFFVIAIIAAVLGFSGIAGAATNIAWILFVVFLILAVISMFRRGKV.

The next 2 membrane-spanning stretches (helical) occupy residues 5–25 and 27–47; these read AMIF…GIAG and ATNI…ISMF.

It belongs to the UPF0391 family.

It is found in the cell membrane. In Xanthomonas oryzae pv. oryzae (strain KACC10331 / KXO85), this protein is UPF0391 membrane protein XOO4217.